Consider the following 614-residue polypeptide: Vitamin B12 transporter BtuB (614 aa).

A signal peptide spans 1 to 20 (MIKKASLLTACSVTAFSAWA). A TonB box motif is present at residues 26–33 (DTLVVTAN). In terms of domain architecture, TBDR plug spans 38-152 (PRSTVLAPTT…IGGVVNIITT (115 aa)). Cyanocob(III)alamin-binding positions include Leu-83, Ser-85, Asn-92, and 110-111 (VS). The 460-residue stretch at 155–614 (EPGTEISAGW…EYTLSGSYTF (460 aa)) folds into the TBDR beta-barrel domain. Transmembrane regions (beta stranded) follow at residues 158 to 165 (TEISAGWG), 169 to 178 (YQNYDVSTQQ), and 184 to 195 (TRVTLLGDYAHT). Asp-199, Gln-211, Asp-213, and Asp-215 together coordinate Ca(2+). Beta stranded transmembrane passes span 217-227 (FLSKTLYGALE) and 232-248 (DAWS…NRTN). Positions 249 and 250 each coordinate Ca(2+). Residue Ala-251 coordinates cyanocob(III)alamin. Asp-261 contacts Ca(2+). 14 consecutive transmembrane segments (beta stranded) span residues 263-277 (RKLY…LRYN), 279-296 (ELIK…KDYN), 309-325 (TLDE…NNVI), 328-337 (HGSIGAGVDW), 353-369 (YDQR…QQVG), 371-381 (FTFEGAARSDD), 385-400 (FGRH…WEFI), 403-417 (YRFI…KAPN), 434-443 (KSKQWEGAFE), 449-458 (VNWRISGYRN), 473-490 (YYNE…TANF), 494-509 (PLTH…ARNA), 517-529 (RRAK…QLDW), and 535-550 (DWGI…YDKD). Thr-309 contacts cyanocob(III)alamin. Arg-517 contacts cyanocob(III)alamin. Tyr-551 serves as a coordination point for cyanocob(III)alamin. Transmembrane regions (beta stranded) follow at residues 558 to 572 (TVKM…LAVA), 585 to 596 (IANLFDKDYETV), and 602 to 614 (AGRE…SYTF). A TonB C-terminal box motif is present at residues 597–614 (YGYQTAGREYTLSGSYTF).

The protein belongs to the TonB-dependent receptor family. BtuB (TC 1.B.14.3.1) subfamily.

The protein resides in the cell outer membrane. Its function is as follows. Involved in the active translocation of vitamin B12 (cyanocobalamin) across the outer membrane to the periplasmic space. It derives its energy for transport by interacting with the trans-periplasmic membrane protein TonB. In Escherichia coli O9:H4 (strain HS), this protein is Vitamin B12 transporter BtuB.